A 245-amino-acid chain; its full sequence is 2,3-bisphosphoglycerate-dependent phosphoglycerate mutase (245 aa).

Residues 8-15, 21-22, arginine 60, 87-90, lysine 98, 114-115, and 183-184 contribute to the substrate site; these read RHGQSLWN, TG, ERHY, RR, and GN. The active-site Tele-phosphohistidine intermediate is the histidine 9. The active-site Proton donor/acceptor is the glutamate 87.

Belongs to the phosphoglycerate mutase family. BPG-dependent PGAM subfamily.

It carries out the reaction (2R)-2-phosphoglycerate = (2R)-3-phosphoglycerate. It functions in the pathway carbohydrate degradation; glycolysis; pyruvate from D-glyceraldehyde 3-phosphate: step 3/5. Functionally, catalyzes the interconversion of 2-phosphoglycerate and 3-phosphoglycerate. The polypeptide is 2,3-bisphosphoglycerate-dependent phosphoglycerate mutase (Bacillus thuringiensis subsp. konkukian (strain 97-27)).